The sequence spans 858 residues: Bifunctional uridylyltransferase/uridylyl-removing enzyme (858 aa).

A uridylyltransferase region spans residues 1-324 (MSAHAAPSPE…PATSGITRVL (324 aa)). The uridylyl-removing stretch occupies residues 325-681 (SPDRFVEKQG…ARPSPIGDAL (357 aa)). The HD domain maps to 443–565 (VDQHILMVLR…VGNERYLTAL (123 aa)). ACT domains are found at residues 682–761 (QVLV…PEPS) and 790–858 (ILSV…AIAV).

The protein belongs to the GlnD family. Requires Mg(2+) as cofactor.

It catalyses the reaction [protein-PII]-L-tyrosine + UTP = [protein-PII]-uridylyl-L-tyrosine + diphosphate. The enzyme catalyses [protein-PII]-uridylyl-L-tyrosine + H2O = [protein-PII]-L-tyrosine + UMP + H(+). With respect to regulation, uridylyltransferase (UTase) activity is inhibited by glutamine, while glutamine activates uridylyl-removing (UR) activity. Modifies, by uridylylation and deuridylylation, the PII regulatory proteins (GlnB and homologs), in response to the nitrogen status of the cell that GlnD senses through the glutamine level. Under low glutamine levels, catalyzes the conversion of the PII proteins and UTP to PII-UMP and PPi, while under higher glutamine levels, GlnD hydrolyzes PII-UMP to PII and UMP (deuridylylation). Thus, controls uridylylation state and activity of the PII proteins, and plays an important role in the regulation of nitrogen fixation and metabolism. The polypeptide is Bifunctional uridylyltransferase/uridylyl-removing enzyme (Burkholderia lata (strain ATCC 17760 / DSM 23089 / LMG 22485 / NCIMB 9086 / R18194 / 383)).